The sequence spans 271 residues: Tryptophan synthase alpha chain (271 aa).

Catalysis depends on proton acceptor residues E53 and D64.

This sequence belongs to the TrpA family. In terms of assembly, tetramer of two alpha and two beta chains.

It carries out the reaction (1S,2R)-1-C-(indol-3-yl)glycerol 3-phosphate + L-serine = D-glyceraldehyde 3-phosphate + L-tryptophan + H2O. It participates in amino-acid biosynthesis; L-tryptophan biosynthesis; L-tryptophan from chorismate: step 5/5. In terms of biological role, the alpha subunit is responsible for the aldol cleavage of indoleglycerol phosphate to indole and glyceraldehyde 3-phosphate. The protein is Tryptophan synthase alpha chain of Streptomyces coelicolor (strain ATCC BAA-471 / A3(2) / M145).